Consider the following 385-residue polypeptide: Glucans biosynthesis protein C (385 aa).

A run of 10 helical transmembrane segments spans residues 17 to 37 (AWLM…SHTW), 60 to 80 (MQVF…RYPL), 91 to 111 (VGIP…IMLQ), 137 to 157 (ISHL…VWIF), 173 to 193 (KFSM…YAVI), 212 to 232 (FIVM…LAFI), 239 to 259 (LFTT…VAYL), 274 to 294 (TESV…FSFG), 311 to 331 (ASLF…AYIT), and 338 to 358 (WLGF…LYEI).

Belongs to the acyltransferase 3 family. OpgC subfamily.

It localises to the cell membrane. It functions in the pathway glycan metabolism; osmoregulated periplasmic glucan (OPG) biosynthesis. In terms of biological role, necessary for the succinyl substitution of periplasmic glucans. Could catalyze the transfer of succinyl residues from the cytoplasmic side of the membrane to the nascent glucan backbones on the periplasmic side of the membrane. This is Glucans biosynthesis protein C from Escherichia coli O6:K15:H31 (strain 536 / UPEC).